We begin with the raw amino-acid sequence, 126 residues long: Large ribosomal subunit protein bL12 (126 aa).

This sequence belongs to the bacterial ribosomal protein bL12 family. In terms of assembly, homodimer. Part of the ribosomal stalk of the 50S ribosomal subunit. Forms a multimeric L10(L12)X complex, where L10 forms an elongated spine to which 2 to 4 L12 dimers bind in a sequential fashion. Binds GTP-bound translation factors.

Forms part of the ribosomal stalk which helps the ribosome interact with GTP-bound translation factors. Is thus essential for accurate translation. This chain is Large ribosomal subunit protein bL12, found in Tropheryma whipplei (strain TW08/27) (Whipple's bacillus).